Reading from the N-terminus, the 224-residue chain is Deoxyribose-phosphate aldolase (224 aa).

Aspartate 92 acts as the Proton donor/acceptor in catalysis. Catalysis depends on lysine 154, which acts as the Schiff-base intermediate with acetaldehyde. Catalysis depends on lysine 183, which acts as the Proton donor/acceptor.

It belongs to the DeoC/FbaB aldolase family. DeoC type 1 subfamily.

The protein localises to the cytoplasm. The enzyme catalyses 2-deoxy-D-ribose 5-phosphate = D-glyceraldehyde 3-phosphate + acetaldehyde. The protein operates within carbohydrate degradation; 2-deoxy-D-ribose 1-phosphate degradation; D-glyceraldehyde 3-phosphate and acetaldehyde from 2-deoxy-alpha-D-ribose 1-phosphate: step 2/2. Functionally, catalyzes a reversible aldol reaction between acetaldehyde and D-glyceraldehyde 3-phosphate to generate 2-deoxy-D-ribose 5-phosphate. The polypeptide is Deoxyribose-phosphate aldolase (Mannheimia succiniciproducens (strain KCTC 0769BP / MBEL55E)).